The chain runs to 491 residues: Glutamyl-tRNA(Gln) amidotransferase subunit A (491 aa).

Residues lysine 78 and serine 158 each act as charge relay system in the active site. Serine 182 functions as the Acyl-ester intermediate in the catalytic mechanism.

This sequence belongs to the amidase family. GatA subfamily. In terms of assembly, heterotrimer of A, B and C subunits.

The catalysed reaction is L-glutamyl-tRNA(Gln) + L-glutamine + ATP + H2O = L-glutaminyl-tRNA(Gln) + L-glutamate + ADP + phosphate + H(+). Functionally, allows the formation of correctly charged Gln-tRNA(Gln) through the transamidation of misacylated Glu-tRNA(Gln) in organisms which lack glutaminyl-tRNA synthetase. The reaction takes place in the presence of glutamine and ATP through an activated gamma-phospho-Glu-tRNA(Gln). The chain is Glutamyl-tRNA(Gln) amidotransferase subunit A from Nitrobacter winogradskyi (strain ATCC 25391 / DSM 10237 / CIP 104748 / NCIMB 11846 / Nb-255).